A 185-amino-acid polypeptide reads, in one-letter code: MVSSWRVQQAAQDIRAGAVIAYPTEAVWGLGCDPWDEEAVYRLLAIKSRPVEKGLILIADNIRQFDFLFEDFPQLWLDRMASTWPGPNTWLVPHQNLLPEWITGIHETVALRVTDHPTVRELCALVGPLISTSANPAGRPAARSRLRVEQYFRGQIDGVLGGSLGGRRNPSVIRDIATGQVMRAG.

Residues 4 to 185 (SWRVQQAAQD…IATGQVMRAG (182 aa)) form the YrdC-like domain.

The protein belongs to the SUA5 family. TsaC subfamily.

Its subcellular location is the cytoplasm. It catalyses the reaction L-threonine + hydrogencarbonate + ATP = L-threonylcarbamoyladenylate + diphosphate + H2O. Functionally, required for the formation of a threonylcarbamoyl group on adenosine at position 37 (t(6)A37) in tRNAs that read codons beginning with adenine. Catalyzes the conversion of L-threonine, HCO(3)(-)/CO(2) and ATP to give threonylcarbamoyl-AMP (TC-AMP) as the acyladenylate intermediate, with the release of diphosphate. This is Threonylcarbamoyl-AMP synthase from Pseudomonas savastanoi pv. phaseolicola (strain 1448A / Race 6) (Pseudomonas syringae pv. phaseolicola (strain 1448A / Race 6)).